A 76-amino-acid chain; its full sequence is MFTMKKSLLVLFFLGTISLSLCQEERNADEEDGGEATEEEVKRSFLTTFKDLAIKAAKSAGQSVLSTLSCKLSNTC.

The signal sequence occupies residues 1–22 (MFTMKKSLLVLFFLGTISLSLC). Residues 23–41 (QEERNADEEDGGEATEEEV) constitute a propeptide, removed in mature form. Cys70 and Cys76 are oxidised to a cystine.

As to expression, expressed by the skin glands.

It is found in the secreted. Functionally, has antimicrobial activity against Gram-negative bacterium E.coli ATCC 8739 (MIC=12.5 ug), against Gram positive bacteria S.aureus ATCC 6538 (MIC=6.3 ug) and B.subtilis ATCC 6633 (MIC=25 ug). Has no activity against methicillin-resistant S.aureus ATCC 43300 (MIC= ug) and fungus C.albicans ATCC 90028. The sequence is that of Brevinin-2ISb from Odorrana ishikawae (Ishikawa's frog).